The primary structure comprises 158 residues: Snaclec crotocetin-1 (158 aa).

An N-terminal signal peptide occupies residues 1–23; sequence MGRFIFVSFGLLVVFLSLSGTGA. 3 disulfide bridges follow: C27/C38, C55/C152, and C127/C144. Positions 34-153 constitute a C-type lectin domain; the sequence is YDQYCYRVIK…CEEKNLFVCK (120 aa).

Belongs to the snaclec family. As to quaternary structure, heterodimer; disulfide-linked. As to expression, expressed by the venom gland.

It is found in the secreted. In terms of biological role, interferes with one step of hemostasis (modulation of platelet aggregation, or coagulation cascade, for example). The polypeptide is Snaclec crotocetin-1 (Crotalus durissus terrificus (South American rattlesnake)).